A 286-amino-acid polypeptide reads, in one-letter code: ATP synthase gamma chain (286 aa).

This sequence belongs to the ATPase gamma chain family. F-type ATPases have 2 components, CF(1) - the catalytic core - and CF(0) - the membrane proton channel. CF(1) has five subunits: alpha(3), beta(3), gamma(1), delta(1), epsilon(1). CF(0) has three main subunits: a, b and c.

The protein localises to the cell inner membrane. Functionally, produces ATP from ADP in the presence of a proton gradient across the membrane. The gamma chain is believed to be important in regulating ATPase activity and the flow of protons through the CF(0) complex. In Pseudomonas putida (strain ATCC 700007 / DSM 6899 / JCM 31910 / BCRC 17059 / LMG 24140 / F1), this protein is ATP synthase gamma chain.